Consider the following 326-residue polypeptide: Acetyl-coenzyme A carboxylase carboxyl transferase subunit beta (326 aa).

A CoA carboxyltransferase N-terminal domain is found at 25–308 (LWVKCPASGE…RRDDRSTLQL (284 aa)). The segment at 298 to 326 (RRRDDRSTLQLTPPKTHAPKPPEPKVKPD) is disordered. Positions 317–326 (KPPEPKVKPD) are enriched in basic and acidic residues.

This sequence belongs to the AccD/PCCB family. Acetyl-CoA carboxylase is a heterohexamer composed of biotin carboxyl carrier protein (AccB), biotin carboxylase (AccC) and two subunits each of ACCase subunit alpha (AccA) and ACCase subunit beta (AccD).

Its subcellular location is the cytoplasm. It catalyses the reaction N(6)-carboxybiotinyl-L-lysyl-[protein] + acetyl-CoA = N(6)-biotinyl-L-lysyl-[protein] + malonyl-CoA. It functions in the pathway lipid metabolism; malonyl-CoA biosynthesis; malonyl-CoA from acetyl-CoA: step 1/1. In terms of biological role, component of the acetyl coenzyme A carboxylase (ACC) complex. Biotin carboxylase (BC) catalyzes the carboxylation of biotin on its carrier protein (BCCP) and then the CO(2) group is transferred by the transcarboxylase to acetyl-CoA to form malonyl-CoA. The sequence is that of Acetyl-coenzyme A carboxylase carboxyl transferase subunit beta from Hyphomonas neptunium (strain ATCC 15444).